Consider the following 92-residue polypeptide: Large ribosomal subunit protein eL43 (92 aa).

A C4-type zinc finger spans residues Cys39–Cys60.

Belongs to the eukaryotic ribosomal protein eL43 family.

In Cryptochiton stelleri (Giant gumboot chiton), this protein is Large ribosomal subunit protein eL43 (RPL37A).